Reading from the N-terminus, the 240-residue chain is MIKVEKLSKSFGKHEVLKNISTTIAEGEVVAVIGPSGSGKSTFLRCLNLLEKPNGGTITIKDTEITKPKTNTLKVRENIGMVFQHFHLFPHKTVLENIMYAPVNVKKESKQAAQEKAEDLLRKVGLFEKRNDYPNRLSGGQKQRVAIARALAMNPDIMLFDEPTSALDPEMVKEVLQVMKELVETGMTMVIVTHEMGFAKEVADRVLFMDQGMIVEDGNPKEFFMSPKSKRAQDFLEKIL.

In terms of domain architecture, ABC transporter spans Ile-2 to Leu-236. Gly-34–Ser-41 is a binding site for ATP.

This sequence belongs to the ABC transporter superfamily.

Its subcellular location is the cell membrane. In terms of biological role, part of a binding-protein-dependent transport system for arginine. Probably responsible for energy coupling to the transport system. The chain is Arginine transport ATP-binding protein ArtM (artM) from Bacillus subtilis (strain 168).